The following is a 173-amino-acid chain: ADP-ribosylation factor-like protein 11 (173 aa).

G2 carries N-myristoyl glycine lipidation. GTP contacts are provided by residues 17-24, 61-65, and 120-123; these read GLDCAGKT, DIGGQ, and NKQE.

The protein belongs to the small GTPase superfamily. Arf family.

May play a role in apoptosis. May act as a tumor suppressor. The polypeptide is ADP-ribosylation factor-like protein 11 (Arl11) (Rattus norvegicus (Rat)).